Reading from the N-terminus, the 446-residue chain is MGLGASSEQPAGGEGFHLHGVQENSPAQQAGLEPYFDFIITIGHSRLNKENDTLKALLKANVEKPVKLEVFNMKTMKVREVEVVPSNMWGGQGLLGASVRFCSFRRASEHVWHVLDVEPSSPAALAGLCPYTDYIVGSDQILQESEDFFTLIESHEGKPLKLMVYNSESDSCREVTVTPNAAWGGEGSLGCGIGYGYLHRIPTQPSSQHKKPPGATPPGTPATTSQLTAFPLGAPPPWPIPQDSSGPELGSRQSDFMEALPQVPGSFMEGQLLGPGSPSHGAADCGGCLRAMEIPLQPPPPVQRVMDPGFLDVSGMSLLDSSNISVCPSLSSSTVLTSTAVSVSGPEDIGSSSSSHERGGEATWSGSEFEISFPDSPGAQAQADHLPRLTLPDGLTSAASPEEGLSAELLEAQTEEPADTASLDCRAETEGRASQAQATPDPEPGL.

The disordered stretch occupies residues 1–20 (MGLGASSEQPAGGEGFHLHG). Glycine 2 carries the N-myristoyl glycine lipid modification. 2 consecutive PDZ GRASP-type domains span residues 14–104 (EGFH…FCSF) and 110–198 (HVWH…YGYL). The interval 14–214 (EGFHLHGVQE…PSSQHKKPPG (201 aa)) is GRASP. The Zn(2+) site is built by histidine 17, histidine 19, and cysteine 102. The essential for interaction with GOLGA2/GM130 stretch occupies residues 189–201 (LGCGIGYGYLHRI). Disordered stretches follow at residues 202–252 (PTQP…LGSR) and 343–446 (VSGP…EPGL). Residues threonine 216, threonine 220, and threonine 224 each carry the phosphothreonine modification. Over residues 343–354 (VSGPEDIGSSSS) the composition is skewed to low complexity. Residues serine 365, serine 367, and serine 376 each carry the phosphoserine modification.

It belongs to the GORASP family. As to quaternary structure, homodimer. Forms higher-order oligomers under interphase but not mitotic conditions. Dimers of the protein on one membrane might be able to interact with dimers on another and so stack cisternae. Interacts with the C-terminus of GOLGA2/GM130 under both mitotic and non-mitotic conditions. The interaction is critical for the correct targeting of both proteins to the cis-Golgi. Interacts with TMED2 and TMED3. Phosphorylated by CDC2/B1 and PLK kinases during mitosis. Phosphorylation cycle correlates with the cisternal stacking cycle. Phosphorylation of the homodimer prevents the association of dimers into higher-order oligomers, leading to cisternal unstacking. In terms of processing, target for caspase-3 cleavage during apoptosis. The cleavage contributes to Golgi fragmentation and occurs very early in the execution phase of apoptosis. Post-translationally, myristoylated.

The protein resides in the golgi apparatus. The protein localises to the cis-Golgi network membrane. Its function is as follows. Key structural protein of the Golgi apparatus. The membrane cisternae of the Golgi apparatus adhere to each other to form stacks, which are aligned side by side to form the Golgi ribbon. Acting in concert with GORASP2/GRASP55, is required for the formation and maintenance of the Golgi ribbon, and may be dispensable for the formation of stacks. However, other studies suggest that GORASP1 plays an important role in assembly and membrane stacking of the cisternae, and in the reassembly of Golgi stacks after breakdown during mitosis. Caspase-mediated cleavage of GORASP1 is required for fragmentation of the Golgi during apoptosis. Also mediates, via its interaction with GOLGA2/GM130, the docking of transport vesicles with the Golgi membranes. Mediates ER stress-induced unconventional (ER/Golgi-independent) trafficking of core-glycosylated CFTR to cell membrane. This chain is Golgi reassembly-stacking protein 1 (Gorasp1), found in Mus musculus (Mouse).